A 95-amino-acid polypeptide reads, in one-letter code: Protein ECS1 (95 aa).

Residues 1–27 (MASSIVSSMFLFLLLLLVFPHIDNVLG) form the signal peptide.

As to expression, expressed in leaves, flowers and stems, but not in roots.

It localises to the secreted. The protein resides in the cell wall. Maybe involved in defense responses to X.campestris, but probably not a X.campestris pv. campestris race 750 (e.g. Xcc750) resistance gene; according to genetic data, linked to a locus influencing resistance to Xcc750. The sequence is that of Protein ECS1 from Arabidopsis thaliana (Mouse-ear cress).